Reading from the N-terminus, the 106-residue chain is Putative double-stranded DNA mimic protein VP1949 (106 aa).

The protein belongs to the putative dsDNA mimic protein family.

Its function is as follows. May act as a double-stranded DNA (dsDNA) mimic. Probably regulates the activity of a dsDNA-binding protein. The chain is Putative double-stranded DNA mimic protein VP1949 from Vibrio parahaemolyticus serotype O3:K6 (strain RIMD 2210633).